A 246-amino-acid chain; its full sequence is MMTSSHQSNTTGFKPRRIKTTAKPPRQINNKEPSPATQPVLKCPRCDSVNTKFCYYNNYSLSQPRHYCKNCRRYWTRGGALRNVPIGGSTRNKNKPCSLQVISSPPLFSNGTSSASRELVRNHPSTAMMMMSSGGFSGYMFPLDPNFNLASSSIESLSSFNQDLHQKLQQQRLVTSMFLQDSLPVNEKTVMFQNVELIPPSTVTTDWVFDRFATGGGATSGNHEDNDDGEGNLGNWFHNANNNALL.

Polar residues-rich tracts occupy residues 1–12 (MMTSSHQSNTTG) and 27–37 (QINNKEPSPAT). Positions 1 to 39 (MMTSSHQSNTTGFKPRRIKTTAKPPRQINNKEPSPATQP) are disordered. The segment at 41-95 (LKCPRCDSVNTKFCYYNNYSLSQPRHYCKNCRRYWTRGGALRNVPIGGSTRNKNK) adopts a Dof-type zinc-finger fold. 4 residues coordinate Zn(2+): Cys43, Cys46, Cys68, and Cys71. Residues 216–235 (GGATSGNHEDNDDGEGNLGN) are disordered.

In terms of assembly, interacts with ZFP2. Highly expressed at the base of all organs of the flower, especially in the abscission zone (AZ) of petals, stamens and sepals. Expressed at low levels in sepals, filaments, stigmatic papillae, tips of young siliques, and at the base of pedicels and leaf trichomes.

The protein resides in the nucleus. Its function is as follows. Transcription factor that binds specifically to a 5'-AA[AG]G-3' consensus core sequence. Involved in the negative regulation of floral organ abscission by binding to the typical DOF 5'-AAAG-3' sequences in the promoter of ADPG2/PGAZAT, and by down-regulating its expression. ADPG2/PGAZAT is an abscission-related and cell wall hydrolyzing polygalacturonase. May act through the interaction with ZFP2, an abscission-related transcription factor. In Arabidopsis thaliana (Mouse-ear cress), this protein is Dof zinc finger protein DOF4.7.